The following is a 417-amino-acid chain: Exodeoxyribonuclease 7 large subunit (417 aa).

The protein belongs to the XseA family. In terms of assembly, heterooligomer composed of large and small subunits.

The protein localises to the cytoplasm. The enzyme catalyses Exonucleolytic cleavage in either 5'- to 3'- or 3'- to 5'-direction to yield nucleoside 5'-phosphates.. Functionally, bidirectionally degrades single-stranded DNA into large acid-insoluble oligonucleotides, which are then degraded further into small acid-soluble oligonucleotides. This Corynebacterium glutamicum (strain ATCC 13032 / DSM 20300 / JCM 1318 / BCRC 11384 / CCUG 27702 / LMG 3730 / NBRC 12168 / NCIMB 10025 / NRRL B-2784 / 534) protein is Exodeoxyribonuclease 7 large subunit.